Here is a 932-residue protein sequence, read N- to C-terminus: DNA mismatch repair protein MutS (932 aa).

ATP is bound at residue 615–622 (GPNMAGKS).

This sequence belongs to the DNA mismatch repair MutS family.

Its function is as follows. This protein is involved in the repair of mismatches in DNA. It is possible that it carries out the mismatch recognition step. This protein has a weak ATPase activity. The protein is DNA mismatch repair protein MutS of Clostridium botulinum (strain Kyoto / Type A2).